The chain runs to 366 residues: Pyruvate dehydrogenase E1 component subunit beta, mitochondrial (366 aa).

A mitochondrion-targeting transit peptide spans 1-33 (MFSRLPTSLARNVARRAPTSFVRPSAAAAALRF). Glu-95 contacts thiamine diphosphate. K(+) contacts are provided by Ala-196, Ile-197, Asp-199, and Asn-201.

Pyruvate dehydrogenase (E1) is a tetramer of 2 alpha and 2 beta subunits. Eukaryotic pyruvate dehydrogenase (PDH) complexes are organized as a core consisting of the oligomeric dihydrolipoamide acetyl-transferase (E2), around which are arranged multiple copies of pyruvate dehydrogenase (E1), dihydrolipoamide dehydrogenase (E3) and protein X (E3BP) bound by non-covalent bonds. Requires thiamine diphosphate as cofactor.

It is found in the mitochondrion matrix. The catalysed reaction is N(6)-[(R)-lipoyl]-L-lysyl-[protein] + pyruvate + H(+) = N(6)-[(R)-S(8)-acetyldihydrolipoyl]-L-lysyl-[protein] + CO2. In terms of biological role, the pyruvate dehydrogenase complex catalyzes the overall conversion of pyruvate to acetyl-CoA and CO(2). This is Pyruvate dehydrogenase E1 component subunit beta, mitochondrial (PDB1) from Saccharomyces cerevisiae (strain ATCC 204508 / S288c) (Baker's yeast).